The primary structure comprises 194 residues: Molybdenum cofactor guanylyltransferase (194 aa).

GTP contacts are provided by residues Leu-12–Gly-14, Lys-25, Asn-53, Asp-71, and Asp-101. Mg(2+) is bound at residue Asp-101.

This sequence belongs to the MobA family. Monomer. An equilibrium exists between a monomeric and oligomeric form of the enzyme, which could be an octamer; whether this oligomeric arrangement is of functional relevance is unclear. Interacts with MoeA and MobB in vivo. It depends on Mg(2+) as a cofactor. Mn(2+) is required as a cofactor.

The protein localises to the cytoplasm. It catalyses the reaction Mo-molybdopterin + GTP + H(+) = Mo-molybdopterin guanine dinucleotide + diphosphate. Transfers a GMP moiety from GTP to Mo-molybdopterin (Mo-MPT) cofactor (Moco or molybdenum cofactor) to form Mo-molybdopterin guanine dinucleotide (Mo-MGD) cofactor. Is also involved in the biosynthesis of the bis-MGD form of the Moco cofactor (Mo-bisMGD) in which the metal is symmetrically ligated by the dithiolene groups of two MGD molecules. Is necessary and sufficient for the in vitro activation of the DMSOR molybdoenzyme that uses the Mo-bisMGD form of molybdenum cofactor, which implies formation and efficient insertion of the cofactor into the enzyme without the need of a chaperone. Is specific for GTP since other nucleotides such as ATP and GMP cannot be utilized. The chain is Molybdenum cofactor guanylyltransferase (mobA) from Escherichia coli (strain K12).